Reading from the N-terminus, the 105-residue chain is Large ribosomal subunit protein uL24 (105 aa).

Belongs to the universal ribosomal protein uL24 family. As to quaternary structure, part of the 50S ribosomal subunit.

One of two assembly initiator proteins, it binds directly to the 5'-end of the 23S rRNA, where it nucleates assembly of the 50S subunit. In terms of biological role, one of the proteins that surrounds the polypeptide exit tunnel on the outside of the subunit. The polypeptide is Large ribosomal subunit protein uL24 (Staphylococcus carnosus (strain TM300)).